The primary structure comprises 120 residues: Nitrogenase-stabilizing/protective protein NifW (120 aa).

The protein belongs to the NifW family. In terms of assembly, homotrimer; associates with NifD.

May protect the nitrogenase Fe-Mo protein from oxidative damage. The polypeptide is Nitrogenase-stabilizing/protective protein NifW (Rhodospirillum rubrum (strain ATCC 11170 / ATH 1.1.1 / DSM 467 / LMG 4362 / NCIMB 8255 / S1)).